The chain runs to 107 residues: Phosphoribosyl-ATP pyrophosphatase 1 (107 aa).

It belongs to the PRA-PH family.

It localises to the cytoplasm. It catalyses the reaction 1-(5-phospho-beta-D-ribosyl)-ATP + H2O = 1-(5-phospho-beta-D-ribosyl)-5'-AMP + diphosphate + H(+). The protein operates within amino-acid biosynthesis; L-histidine biosynthesis; L-histidine from 5-phospho-alpha-D-ribose 1-diphosphate: step 2/9. This Rhodopseudomonas palustris (strain ATCC BAA-98 / CGA009) protein is Phosphoribosyl-ATP pyrophosphatase 1 (hisE1).